Here is a 183-residue protein sequence, read N- to C-terminus: Capsid protein (183 aa).

The disordered stretch occupies residues 136–183; sequence NAPILSTLPETTVVRRRGRSPRRRTPSPRRRRSQSPRRRRSQSRESQC. Residues 149-176 show a composition bias toward basic residues; sequence VRRRGRSPRRRTPSPRRRRSQSPRRRRS. Phosphoserine; by host is present on residues S155, S162, and S170. The stretch at 155-161 is one 1; half-length repeat; it reads SPRRRTP. The interval 155 to 177 is 3 X 8 AA repeats of S-P-R-R-R-[PR]-S-Q; it reads SPRRRTPSPRRRRSQSPRRRRSQ. The Bipartite nuclear localization signal motif lies at 158-175; the sequence is RRTPSPRRRRSQSPRRRR. 2 consecutive repeat copies span residues 162 to 169 and 170 to 177. An RNA binding region spans residues 177 to 183; the sequence is QSRESQC.

Belongs to the orthohepadnavirus core antigen family. As to quaternary structure, homodimerizes, then multimerizes. Interacts with cytosol exposed regions of viral L glycoprotein present in the reticulum-to-Golgi compartment. Interacts with human FLNB. Phosphorylated form interacts with host importin alpha; this interaction depends on the exposure of the NLS, which itself depends upon genome maturation and/or phosphorylation of the capsid protein. Interacts with host NUP153. Phosphorylated by host SRPK1, SRPK2, and maybe protein kinase C or GAPDH. Phosphorylation is critical for pregenomic RNA packaging. Protein kinase C phosphorylation is stimulated by HBx protein and may play a role in transport of the viral genome to the nucleus at the late step during the viral replication cycle.

Its subcellular location is the virion. The protein resides in the host cytoplasm. Functionally, self assembles to form an icosahedral capsid. Most capsids appear to be large particles with an icosahedral symmetry of T=4 and consist of 240 copies of capsid protein, though a fraction forms smaller T=3 particles consisting of 180 capsid proteins. Entering capsids are transported along microtubules to the nucleus. Phosphorylation of the capsid is thought to induce exposure of nuclear localization signal in the C-terminal portion of the capsid protein that allows binding to the nuclear pore complex via the importin (karyopherin-) alpha and beta. Capsids are imported in intact form through the nuclear pore into the nuclear basket, where it probably binds NUP153. Only capsids that contain the mature viral genome can release the viral DNA and capsid protein into the nucleoplasm. Immature capsids get stuck in the basket. Capsids encapsulate the pre-genomic RNA and the P protein. Pre-genomic RNA is reverse-transcribed into DNA while the capsid is still in the cytoplasm. The capsid can then either be directed to the nucleus, providing more genomes for transcription, or bud through the endoplasmic reticulum to provide new virions. This chain is Capsid protein, found in Homo sapiens (Human).